The following is a 528-amino-acid chain: Vacuolar fusion protein MON1 homolog (528 aa).

Polar residues predominate over residues 1–16; it reads MEVEQTSVRSDTNSTC. Positions 1-50 are disordered; it reads MEVEQTSVRSDTNSTCEYLDAEGDPESPNLYQEADPDQEAEQQNHSIISE.

Belongs to the MON1/SAND family. As to quaternary structure, component of the Mon1-Ccz1 guanyl-nucleotide exchange factor complex made up of Mon1, Ccz1 and Bulli; the interaction of Bulli with the Mon1-Ccz1 heterodimer is mediated via the C-terminal Mic1 domain of Bulli. Mon1 and Ccz1 form a stable complex which displays Rab7 GEF activity with or without Bulli; GEF activity is enhanced by Bulli possibly by improving membrane association of the complex. Interacts with Rab5 and Rab7; preferentially binds GTP-bound Rab5 and GDP-bound Rab7.

It is found in the cytoplasm. Its subcellular location is the cytosol. With respect to regulation, the Rab7 guanyl-nucleotide exchange factor (GEF) activity of the Mon1-Ccz1 complex is autoinhibited by the N-terminal disordered region of Mon1. GEF activity is stimulated by Rab5-mediated recruitment to membranes. In terms of biological role, part of the Mon1-Ccz1 guanyl-nucleotide exchange factor complex specific for Rab7 that promotes the exchange of GDP to GTP, converting Rab7 from an inactive GDP-bound form into an active GTP-bound form. Plays an important role in membrane trafficking through the secretory apparatus. Required for recruitment of Rab7 to endosomal and autophagosomal membranes to mediate endolysosomal and autolysosomal vesicle maturation. Required for fusion of multivesicular bodies and lysosomes but not their formation or trafficking. Involved in the replacement of Rab5 (and possibly Rab4) with Rab7, also known as Rab conversion or the Rab cascade, during endosomal maturation. The Mon1-Ccz1 complex is recruited to phosphatidylinositol 3-phosphate (PtdIns[3]P) enriched membranes by Rab5, which stimulates recruitment and guanyl-nucleotide exchange of Rab7. Together with Rab7 required for autolysosome formation in fat cells and autophagic degradation during starvation-induced basal and developmental autophagy. Involved in neuromuscular junction (NMJ) presynaptic bouton function and morphogenesis. Together with Rab7, regulates levels of postsynaptic glutamate receptor GluRIIA in the NMJ presynapse. The polypeptide is Vacuolar fusion protein MON1 homolog (Drosophila melanogaster (Fruit fly)).